Here is a 318-residue protein sequence, read N- to C-terminus: Na(+)-translocating ferredoxin:NAD(+) oxidoreductase complex subunit D (318 aa).

3 consecutive transmembrane segments (helical) span residues 35–55, 77–99, and 114–134; these read LAVAGYVFGLWALALVAICVI, WSAVVTGVLLAFNLPINAPWWIG, and FGGLGQNFINPALAARAFLLA. T156 is subject to FMN phosphoryl threonine. A run of 3 helical transmembrane segments spans residues 182–202, 206–226, and 261–281; these read VYGCIGEISALALLIGGLYLI, IISWRIPTIYLLTIAIFALLV, and IIYAIGCGLITMIIRLYGGYP.

It belongs to the NqrB/RnfD family. In terms of assembly, the complex is composed of six subunits: RnfA, RnfB, RnfC, RnfD, RnfE and RnfG. FMN serves as cofactor.

The protein localises to the cell membrane. It catalyses the reaction 2 reduced [2Fe-2S]-[ferredoxin] + Na(+)(in) + NAD(+) + H(+) = 2 oxidized [2Fe-2S]-[ferredoxin] + Na(+)(out) + NADH. In terms of biological role, part of a membrane-bound complex that couples electron transfer with translocation of ions across the membrane. Couples electron transfer from reduced ferredoxin to NAD(+) with electrogenic movement of Na(+) out of the cell. Involved in caffeate respiration. The protein is Na(+)-translocating ferredoxin:NAD(+) oxidoreductase complex subunit D of Acetobacterium woodii (strain ATCC 29683 / DSM 1030 / JCM 2381 / KCTC 1655 / WB1).